The primary structure comprises 88 residues: Large ribosomal subunit protein eL34 (88 aa).

The protein belongs to the eukaryotic ribosomal protein eL34 family.

The sequence is that of Large ribosomal subunit protein eL34 from Methanobrevibacter smithii (strain ATCC 35061 / DSM 861 / OCM 144 / PS).